We begin with the raw amino-acid sequence, 407 residues long: Deacetylase Atu3266 (407 aa).

Zn(2+)-binding residues include His-75, His-77, Lys-173, His-206, His-229, and Asp-289. Lys-173 bears the N6-carboxylysine mark.

The protein belongs to the metallo-dependent hydrolases superfamily. Atu3266/EF_0837 deacetylase family. As to quaternary structure, homohexamer, dimer of trimers. Requires Zn(2+) as cofactor.

In terms of biological role, esterase that catalyzes the deacetylation of acetyl-(R)-mandelate (in vitro). Can also hydrolyze acetyl glycolate, but with lower efficiency. Has very low N-acetyl-D-amino acid deacetylase activity with N-acetyl-D-serine and N-acetyl-D-threonine (in vitro). Theoretical substrate docking studies suggest that other N-acetylated amino acids may optimally occupy the active site and may in fact be the physiological substrates. This is Deacetylase Atu3266 from Agrobacterium fabrum (strain C58 / ATCC 33970) (Agrobacterium tumefaciens (strain C58)).